The chain runs to 258 residues: Spindlin-2A (258 aa).

Low complexity predominate over residues 1–23; the sequence is MKTPNAQEAEGQQTRAAAGRATG. The disordered stretch occupies residues 1–49; sequence MKTPNAQEAEGQQTRAAAGRATGSANMTKKKVSQKKQRGRPSSQPRRNI. Basic residues predominate over residues 28–39; the sequence is TKKKVSQKKQRG. 3 tudor-like domain regions span residues 50–99, 129–178, and 210–255; these read VGCR…LELH, IGKA…YQLL, and IGKH…YDLV. Histone H3K4me3 and H3R8me2a binding regions lie at residues Glu-138 and 246-248; that span reads DFH.

It belongs to the SPIN/STSY family. In terms of assembly, interacts with C11orf84/SPINDOC.

The protein localises to the nucleus. In terms of biological role, may be involved in the regulation of cell cycle progression. Exhibits H3K4me3-binding activity. The polypeptide is Spindlin-2A (SPIN2A) (Homo sapiens (Human)).